The primary structure comprises 564 residues: Urease subunit alpha (564 aa).

A Urease domain is found at 126-564; the sequence is GGIDTHIHFI…LPMAQRYFLF (439 aa). The Ni(2+) site is built by H131, H133, and K214. An N6-carboxylysine modification is found at K214. H216 provides a ligand contact to substrate. 2 residues coordinate Ni(2+): H243 and H269. H317 serves as the catalytic Proton donor. Ni(2+) is bound at residue D357.

The protein belongs to the metallo-dependent hydrolases superfamily. Urease alpha subunit family. In terms of assembly, heterotrimer of UreA (gamma), UreB (beta) and UreC (alpha) subunits. Three heterotrimers associate to form the active enzyme. The cofactor is Ni cation. Carboxylation allows a single lysine to coordinate two nickel ions.

It localises to the cytoplasm. It carries out the reaction urea + 2 H2O + H(+) = hydrogencarbonate + 2 NH4(+). Its pathway is nitrogen metabolism; urea degradation; CO(2) and NH(3) from urea (urease route): step 1/1. This chain is Urease subunit alpha, found in Burkholderia thailandensis (strain ATCC 700388 / DSM 13276 / CCUG 48851 / CIP 106301 / E264).